We begin with the raw amino-acid sequence, 875 residues long: Protein translocase subunit SecA (875 aa).

ATP-binding positions include Q87, 105-109 (GEGKT), and D512. 4 residues coordinate Zn(2+): C860, C862, C871, and H872.

It belongs to the SecA family. As to quaternary structure, monomer and homodimer. Part of the essential Sec protein translocation apparatus which comprises SecA, SecYEG and auxiliary proteins SecDF-YajC and YidC. Zn(2+) serves as cofactor.

The protein resides in the cell inner membrane. It localises to the cytoplasm. It carries out the reaction ATP + H2O + cellular proteinSide 1 = ADP + phosphate + cellular proteinSide 2.. Functionally, part of the Sec protein translocase complex. Interacts with the SecYEG preprotein conducting channel. Has a central role in coupling the hydrolysis of ATP to the transfer of proteins into and across the cell membrane, serving both as a receptor for the preprotein-SecB complex and as an ATP-driven molecular motor driving the stepwise translocation of polypeptide chains across the membrane. In Buchnera aphidicola subsp. Acyrthosiphon pisum (strain 5A), this protein is Protein translocase subunit SecA.